A 120-amino-acid chain; its full sequence is Ribonuclease P protein component (120 aa).

It belongs to the RnpA family. In terms of assembly, consists of a catalytic RNA component (M1 or rnpB) and a protein subunit.

It carries out the reaction Endonucleolytic cleavage of RNA, removing 5'-extranucleotides from tRNA precursor.. Functionally, RNaseP catalyzes the removal of the 5'-leader sequence from pre-tRNA to produce the mature 5'-terminus. It can also cleave other RNA substrates such as 4.5S RNA. The protein component plays an auxiliary but essential role in vivo by binding to the 5'-leader sequence and broadening the substrate specificity of the ribozyme. The protein is Ribonuclease P protein component of Dehalococcoides mccartyi (strain ATCC BAA-2266 / KCTC 15142 / 195) (Dehalococcoides ethenogenes (strain 195)).